The following is a 1270-amino-acid chain: Nuclear exosome regulator NRDE2 (1270 aa).

Disordered stretches follow at residues 1–22 (MFRAYGNNGLKNPERISGENPD) and 119–209 (SVKS…HTLM). The span at 119 to 135 (SVKSLNGCQDPPETSQQ) shows a compositional bias: polar residues. Residues 164-184 (QRSRSREKKRRKKERRRKRSS) are compositionally biased toward basic residues. Residues 192–204 (RSRDRSSRARDTS) are compositionally biased toward basic and acidic residues.

The protein belongs to the NRDE2 family. In terms of assembly, interacts with nrde-3.

It localises to the nucleus. The protein resides in the nucleus speckle. It is found in the nucleolus. In terms of biological role, protein of the nuclear speckles that regulates RNA exosomal degradation. Involved in short interfering RNAs-mediated silencing in nuclei. Functions with nrde-3 in the nuclear RNA-mediated gene silencing (RNAi) pathway to regulate gene expression via inhibition of RNA polymerases I and II during the elongation phase of transcription. Required for exogenous RNAi-induced H3K27 methylation. In Caenorhabditis elegans, this protein is Nuclear exosome regulator NRDE2 (nrde-2).